A 250-amino-acid polypeptide reads, in one-letter code: MPAERSPIDTAKFAAARRAVDFVQDGMKLGLGTGSTAAWMVRCLAERVREEGLRVQGVPTSSRTAELARELGIPVVTLDEARWLDLTIDGADEFDSEFNLIKGGGAALLQEKIVATASDRMIVIADAAKEVAQLGAFPLPVEVIPFGWQSTRMLIEEALIGLDVLGREVTLRRSGEAPLLTDEKNYILDLHLTRIGHPRQLALTLNQIAGVVENGLFIDICDTVVVGHGDGRVTVRDLGASRNIFADLGE.

Residues 33 to 36 (TGST), 89 to 92 (DGAD), and 102 to 105 (KGGG) each bind substrate. Glu111 acts as the Proton acceptor in catalysis. Lys129 provides a ligand contact to substrate.

Belongs to the ribose 5-phosphate isomerase family. As to quaternary structure, homodimer.

The enzyme catalyses aldehydo-D-ribose 5-phosphate = D-ribulose 5-phosphate. The protein operates within carbohydrate degradation; pentose phosphate pathway; D-ribose 5-phosphate from D-ribulose 5-phosphate (non-oxidative stage): step 1/1. Catalyzes the reversible conversion of ribose-5-phosphate to ribulose 5-phosphate. In Cereibacter sphaeroides (strain ATCC 17025 / ATH 2.4.3) (Rhodobacter sphaeroides), this protein is Ribose-5-phosphate isomerase A.